The primary structure comprises 312 residues: Envelope glycoprotein K (312 aa).

An N-terminal signal peptide occupies residues 1 to 20 (MLLGGRPLHLLVLGVMGAYA). Residues 21–91 (GLGAYYATVA…VVYARRDCRA (71 aa)) lie on the Extracellular side of the membrane. N-linked (GlcNAc...) asparagine; by host glycans are attached at residues Asn-58 and Asn-67. A helical membrane pass occupies residues 92–112 (YLWDVHFRLAAVAWLLYAAFV). At 113–187 (YARQERRMFG…DPITLAHRHP (75 aa)) the chain is on the cytoplasmic side. The helical transmembrane segment at 188–208 (TLIALILLELGLRLGARMALF) threads the bilayer. Residues 209 to 227 (TTLGVTRAPCALVFPLYAR) are Extracellular-facing. A helical membrane pass occupies residues 228–248 (ALVWIFVLAVGALELLAATLP). Residues 249-280 (HIARVSGATATPARSDGGRAALGVCGACCSTV) are Cytoplasmic-facing. The chain crosses the membrane as a helical span at residues 281-301 (LAGIFAKALYLCLLVGGVLLF). The Extracellular segment spans residues 302 to 312 (LHYERHITIFG).

This sequence belongs to the alphaherpesvirinae glycoprotein K family. In terms of assembly, interacts (via UL20 interaction region) with protein UL20 homolog (via N-terminus); this interaction probably plays a role in the coordinate transport of protein UL20 homolog and gK to the trans-Golgi network (TGN), and is required for the cell surface expression of gK. In terms of processing, N-glycosylated.

The protein resides in the host cell membrane. The protein localises to the host endosome membrane. It is found in the host Golgi apparatus membrane. In terms of biological role, glycoprotein that probably modulates membrane fusion events during secondary envelopment of cytoplasmic capsids that bud into specific trans-Golgi network (TGN)-derived membranes. The polypeptide is Envelope glycoprotein K (gK) (Sus scrofa (Pig)).